Reading from the N-terminus, the 202-residue chain is MLRRTSFNFTGRAMISRGSPEWSHRLDLKKGKKTTMMHKLGTSKPNNALQYAQMTLHDLTEWCLAYSPWPLTFGLACCAVEMMHAYASRYDLDRFGIVPRPTPRQAEIIIVSGTVTNKMAPILRNIYVQMVNPKWVISMGSCANGGGYYHFSYAVLRGCERAIPVDFWIPGCPPSAESLVFCLHTLQKKIRWHEIQKYSVRD.

The N-terminal 56 residues, 1-56 (MLRRTSFNFTGRAMISRGSPEWSHRLDLKKGKKTTMMHKLGTSKPNNALQYAQMTL), are a transit peptide targeting the mitochondrion. Positions 77, 78, 142, and 172 each coordinate [4Fe-4S] cluster.

Belongs to the complex I 20 kDa subunit family. As to quaternary structure, complex I is composed of 45 different subunits This is a component of the iron-sulfur (IP) fragment of the enzyme. It depends on [4Fe-4S] cluster as a cofactor.

The protein localises to the mitochondrion. It carries out the reaction a ubiquinone + NADH + 5 H(+)(in) = a ubiquinol + NAD(+) + 4 H(+)(out). Functionally, core subunit of the mitochondrial membrane respiratory chain NADH dehydrogenase (Complex I) that is believed to belong to the minimal assembly required for catalysis. Complex I functions in the transfer of electrons from NADH to the respiratory chain. The immediate electron acceptor for the enzyme is believed to be ubiquinone. The chain is NADH dehydrogenase [ubiquinone] iron-sulfur protein 7, mitochondrial (NDHK) from Trypanosoma brucei brucei.